A 127-amino-acid polypeptide reads, in one-letter code: Two-component response regulator ORR41 (127 aa).

In terms of domain architecture, Response regulatory spans 7–125 (RVLLVEDEEI…KLGVILAKFR (119 aa)). At D60 the chain carries 4-aspartylphosphate.

This sequence belongs to the ARR family. Type-C subfamily. In terms of processing, two-component system major event consists of a His-to-Asp phosphorelay between a sensor histidine kinase (HK) and a response regulator (RR). In plants, the His-to-Asp phosphorelay involves an additional intermediate named Histidine-containing phosphotransfer protein (HPt). This multistep phosphorelay consists of a His-Asp-His-Asp sequential transfer of a phosphate group between first a His and an Asp of the HK protein, followed by the transfer to a conserved His of the HPt protein and finally the transfer to an Asp in the receiver domain of the RR protein.

Functionally, functions as a response regulator involved in His-to-Asp phosphorelay signal transduction system. Phosphorylation of the Asp residue in the receiver domain activates the ability of the protein to promote the transcription of target genes. May directly activate some type-A response regulators in response to cytokinins. The polypeptide is Two-component response regulator ORR41 (Oryza sativa subsp. japonica (Rice)).